The primary structure comprises 226 residues: Reticulon-like protein B16 (226 aa).

A Reticulon domain is found at 41–224 (AADLLLWRRR…RLSWSLSKDK (184 aa)). 3 helical membrane passes run 54–74 (LGVI…GLPF), 75–95 (LSVS…HARV), and 149–169 (VVIC…CTLL).

It is found in the endoplasmic reticulum membrane. In Arabidopsis thaliana (Mouse-ear cress), this protein is Reticulon-like protein B16 (RTNLB16).